The chain runs to 223 residues: Noggin (223 aa).

The N-terminal stretch at 1–26 (MDPPRLRVATYLLLLSVGLLLHGGAC) is a signal peptide. The N-linked (GlcNAc...) asparagine glycan is linked to Asn-61. Intrachain disulfides connect Cys-143/Cys-180, Cys-166/Cys-217, Cys-172/Cys-219, and Cys-195/Cys-204.

The protein belongs to the noggin family. Homodimer.

Its subcellular location is the secreted. Its function is as follows. Inhibitor of bone morphogenetic proteins (BMP) signaling. This chain is Noggin (nog), found in Takifugu rubripes (Japanese pufferfish).